The following is a 150-amino-acid chain: Ribosomal RNA large subunit methyltransferase H (150 aa).

Residues Ala100 and 118–123 (LSEMTF) each bind S-adenosyl-L-methionine.

The protein belongs to the RNA methyltransferase RlmH family. As to quaternary structure, homodimer.

The protein resides in the cytoplasm. It carries out the reaction pseudouridine(1915) in 23S rRNA + S-adenosyl-L-methionine = N(3)-methylpseudouridine(1915) in 23S rRNA + S-adenosyl-L-homocysteine + H(+). Its function is as follows. Specifically methylates the pseudouridine at position 1915 (m3Psi1915) in 23S rRNA. The chain is Ribosomal RNA large subunit methyltransferase H from Helicobacter pylori (strain Shi470).